Here is a 74-residue protein sequence, read N- to C-terminus: Male-specific sperm protein Mst84Db (74 aa).

Belongs to the MST(3)CGP family. In terms of tissue distribution, testis.

The polypeptide is Male-specific sperm protein Mst84Db (Mst84Db) (Drosophila melanogaster (Fruit fly)).